Consider the following 342-residue polypeptide: Probable endoglucanase (342 aa).

The first 20 residues, Met-1–Ala-20, serve as a signal peptide directing secretion. Glu-57 serves as the catalytic Proton donor. The active-site Nucleophile is Asp-114.

The protein belongs to the glycosyl hydrolase 8 (cellulase D) family.

It localises to the secreted. The enzyme catalyses Endohydrolysis of (1-&gt;4)-beta-D-glucosidic linkages in cellulose, lichenin and cereal beta-D-glucans.. Enzyme capable of hydrolyzing carboxy-methyl-cellulose (CMC). This is Probable endoglucanase (cmcAX) from Novacetimonas hansenii (Komagataeibacter hansenii).